The primary structure comprises 267 residues: Indole-3-glycerol phosphate synthase (267 aa).

This sequence belongs to the TrpC family.

The enzyme catalyses 1-(2-carboxyphenylamino)-1-deoxy-D-ribulose 5-phosphate + H(+) = (1S,2R)-1-C-(indol-3-yl)glycerol 3-phosphate + CO2 + H2O. It participates in amino-acid biosynthesis; L-tryptophan biosynthesis; L-tryptophan from chorismate: step 4/5. This Cupriavidus necator (strain ATCC 17699 / DSM 428 / KCTC 22496 / NCIMB 10442 / H16 / Stanier 337) (Ralstonia eutropha) protein is Indole-3-glycerol phosphate synthase.